The sequence spans 312 residues: MAELACFVSFSLTEDKVKWFPINKKAVKTMLCAKVEKDQRSNYYDTILYGVAPPPEFRNRFKTTERYGLDYESDQYSEVANLLADVLNMVSMPTEKFQFDIVKTVVQVRHLENLLLRIKDTDDILSENVKLRVKAVMIACNLVNETETTPLTESNEIVYQDSYFTITKLDYSSHKLLPLMADEYKITINTKTDIPDRDQTAFAAYIRYNFNKFAAISHGKRHWRLVLHSQLMSHAERLDRKIKSDKKHGRQFAYDDGDMAFVHPGWKACIGQLCGGTTFEVAKTSLYSVKTSKTVRTATNKIESDLISMVGN.

Residues 107-109, K185, and 218-220 each bind ATP; these read QVR and HGK. The tract at residues 202-238 is RNA-binding; the sequence is FAAYIRYNFNKFAAISHGKRHWRLVLHSQLMSHAERL. The active-site For NTPase and RTPase activities is H222. R224 contributes to the ATP binding site.

It belongs to the rotavirus NSP2 family. As to quaternary structure, homooctamer. Interacts with VP1; this interaction is weak. Interacts with NSP5; this interaction leads to up-regulation of NSP5 phosphorylation and formation of viral factories. Mg(2+) is required as a cofactor.

The protein resides in the host cytoplasm. Participates in replication and packaging of the viral genome. Plays a crucial role, together with NSP5, in the formation of virus factories (viroplasms) which are large inclusions in the host cytoplasm where replication intermediates are assembled and viral RNA replication takes place. Displays ssRNA binding, NTPase, RNA triphosphatase (RTPase) and ATP-independent helix-unwinding activities. The unwinding activity may prepare and organize plus-strand RNAs for packaging and replication by removing interfering secondary structures. The RTPase activity plays a role in the removal of the gamma-phosphate from the rotavirus RNA minus strands of dsRNA genome segments. In Rotavirus C (strain RVC/Pig/United States/Cowden/1980) (RV-C), this protein is Non-structural protein 2.